Reading from the N-terminus, the 385-residue chain is 28S rRNA (uridine-N(3))-methyltransferase (385 aa).

Disordered stretches follow at residues 1–35 and 47–72; these read MAER…KKKW and QRAQ…NQGR. Basic and acidic residues-rich tracts occupy residues 15 to 35 and 47 to 58; these read HGQR…KKKW and QRAQEEEAKRQE. S-adenosyl-L-methionine is bound by residues Arg-293, Gly-313, Asn-342, and Thr-343.

The protein belongs to the class IV-like SAM-binding methyltransferase superfamily. As to quaternary structure, interacts with INCA1.

It is found in the cytoplasm. Its subcellular location is the cytoskeleton. The protein resides in the spindle. The protein localises to the chromosome. It localises to the centromere. It is found in the kinetochore. Its subcellular location is the microtubule organizing center. The protein resides in the centrosome. It catalyses the reaction uridine in 28S rRNA + S-adenosyl-L-methionine = N(3)-methyluridine in 28S rRNA + S-adenosyl-L-homocysteine + H(+). S-adenosyl-L-methionine-dependent methyltransferase that specifically methylates the N3 position of a uridine in 28S rRNA. Required for association of the centrosomes with the poles of the bipolar mitotic spindle during metaphase. Also involved in chromosome alignment. May promote centrosome maturation probably by recruiting A-kinase anchor protein AKAP9 to centrosomes in early mitosis. Binds specifically to miRNA MIR145 hairpin, regulates MIR145 expression at a postranscriptional level. This chain is 28S rRNA (uridine-N(3))-methyltransferase, found in Mus musculus (Mouse).